The following is a 199-amino-acid chain: N-(5'-phosphoribosyl)anthranilate isomerase (199 aa).

The protein belongs to the TrpF family.

The catalysed reaction is N-(5-phospho-beta-D-ribosyl)anthranilate = 1-(2-carboxyphenylamino)-1-deoxy-D-ribulose 5-phosphate. It participates in amino-acid biosynthesis; L-tryptophan biosynthesis; L-tryptophan from chorismate: step 3/5. The polypeptide is N-(5'-phosphoribosyl)anthranilate isomerase (Lacticaseibacillus casei (strain BL23) (Lactobacillus casei)).